The primary structure comprises 92 residues: UPF0223 protein SMU_1141c (92 aa).

This sequence belongs to the UPF0223 family.

The polypeptide is UPF0223 protein SMU_1141c (Streptococcus mutans serotype c (strain ATCC 700610 / UA159)).